The chain runs to 726 residues: MAR-binding filament-like protein 1 (726 aa).

A chloroplast-targeting transit peptide spans 1 to 41 (MGFLIGGSCFVPSVPLHSRFLSSPSSSSSSSPSSSQFGLLC). The N-terminal 54 residues, 42 to 95 (SSNVAKFKRRRPTLASLNQEDGYEYDVASAKRRAFLLVGISVLPFLQLRSPALA), are a transit peptide targeting the thylakoid. The Lumenal, thylakoid segment spans residues 96–124 (DERGNEIKTSKVDLETEVAVVSEGTSPNP). A helical transmembrane segment spans residues 125 to 145 (FLALLNGLGIFSAGVLGALYA). A coiled-coil region spans residues 144–691 (YALARQDTKA…KGEILRMRSQ (548 aa)). Over 146 to 726 (LARQDTKAAE…VRRRKSSTSS (581 aa)) the chain is Stromal. Residues 678 to 726 (LGSAKGEILRMRSQPDSVKAVNSTDNKEKSDNTVTVKKVVRRRKSSTSS) form a disordered region. A compositionally biased stretch (polar residues) spans 691-701 (QPDSVKAVNST). Positions 715-722 (KVVRRRKS) match the Nuclear localization signal motif. Basic residues predominate over residues 715–726 (KVVRRRKSSTSS).

In terms of assembly, interacts with PTST2; the interaction is essential for the initiation of starch granules biosynthesis in leaf chloroplasts, for the correct location of the process in the stromal spaces between the thylakoid membranes, and for the association of PTST2 with the thylakoid membranes. Post-translationally, predicted to be translocated into the thylakoid by the Tat system. The position of the transit peptide cleavages have not been experimentally proven.

The protein resides in the plastid. Its subcellular location is the chloroplast. It is found in the chloroplast thylakoid membrane. It localises to the chloroplast stroma. The protein localises to the chloroplast nucleoid. The protein resides in the nucleus. Its subcellular location is the nucleus matrix. DNA-binding protein required for the initiation of starch granules biosynthesis in leaf chloroplasts. Anchored to the thylakoid membranes with its C-terminus facing into the stroma where it is essential for localizing PTST2 and SS4 to the stromal spaces between the thylakoid membranes in order to begin starch granule formation. Associated with leaf chloroplastic nucleoids in vivo. Binds to various chloroplastic double-stranded DNA fragments without particular sequence specificity in vitro. May function at the interface between nucleoids and thylakoids possibly by anchoring nucleoids to the thylakoid membrane system in mature chloroplasts. Likely to participate in nuclear architecture by connecting chromatin with the nuclear matrix and potentially with the nuclear envelope. The polypeptide is MAR-binding filament-like protein 1 (Arabidopsis thaliana (Mouse-ear cress)).